We begin with the raw amino-acid sequence, 411 residues long: Adenylosuccinate synthetase (411 aa).

Residues 11–17 and 39–41 each bind GTP; these read GDEGKGK and GHT. Aspartate 12 serves as the catalytic Proton acceptor. Mg(2+)-binding residues include aspartate 12 and glycine 39. IMP is bound by residues 12-15, 37-40, threonine 121, arginine 135, glutamine 215, threonine 230, and arginine 294; these read DEGK and NAGH. The active-site Proton donor is histidine 40. 290-296 contributes to the substrate binding site; it reads TTTKRPR. Residues arginine 296, 322–324, and 400–402 each bind GTP; these read KLD and STS.

It belongs to the adenylosuccinate synthetase family. As to quaternary structure, homodimer. Requires Mg(2+) as cofactor.

Its subcellular location is the cytoplasm. It catalyses the reaction IMP + L-aspartate + GTP = N(6)-(1,2-dicarboxyethyl)-AMP + GDP + phosphate + 2 H(+). It participates in purine metabolism; AMP biosynthesis via de novo pathway; AMP from IMP: step 1/2. Its function is as follows. Plays an important role in the de novo pathway of purine nucleotide biosynthesis. Catalyzes the first committed step in the biosynthesis of AMP from IMP. The polypeptide is Adenylosuccinate synthetase (Helicobacter pylori (strain P12)).